The following is a 257-amino-acid chain: Neurotrophin-3 (257 aa).

The signal sequence occupies residues 1–18; the sequence is MSILFYMIFLAYLRGIQG. The propeptide occupies 19-138; the sequence is NSMDQRRLPE…VANRTARRKR (120 aa). Residues 61-81 form a disordered region; that stretch reads STLPKAEAPREPERGEPAKSE. Over residues 67–79 the composition is skewed to basic and acidic residues; sequence EAPREPERGEPAK. N-linked (GlcNAc...) asparagine glycosylation occurs at asparagine 131. 3 cysteine pairs are disulfide-bonded: cysteine 152–cysteine 217, cysteine 195–cysteine 246, and cysteine 205–cysteine 248.

The protein belongs to the NGF-beta family.

The protein resides in the secreted. Functionally, seems to promote the survival of visceral and proprioceptive sensory neurons. The polypeptide is Neurotrophin-3 (NTF3) (Sus scrofa (Pig)).